Consider the following 225-residue polypeptide: Cobalt transport protein CbiM (225 aa).

6 helical membrane-spanning segments follow: residues 7–27 (VLPLGWCAFWNALALPFVAIA), 43–63 (PFVGLIAAAVFAISCMPVPVP), 76–96 (LAAVLIGPWMTVLVTVVALLI), 108–128 (TLGADVASMGIAGAFTGYFAF), 143–163 (FLAGVTSDWATYATTALALAL), and 175–195 (FTGVALAFVPTQLPLGLLEGV).

This sequence belongs to the CbiM family. In terms of assembly, forms an energy-coupling factor (ECF) transporter complex composed of an ATP-binding protein (A component, CbiO), a transmembrane protein (T component, CbiQ) and 2 possible substrate-capture proteins (S components, CbiM and CbiN) of unknown stoichimetry.

It localises to the cell inner membrane. It functions in the pathway cofactor biosynthesis; adenosylcobalamin biosynthesis. Its function is as follows. Part of the energy-coupling factor (ECF) transporter complex CbiMNOQ involved in cobalt import. The chain is Cobalt transport protein CbiM from Sorangium cellulosum (strain So ce56) (Polyangium cellulosum (strain So ce56)).